Reading from the N-terminus, the 125-residue chain is Secreted RxLR effector protein RXLR-C13 (125 aa).

Residues 1-23 form the signal peptide; that stretch reads MVNSLTFTLVVVCLVRSCDGVAA. The short motif at 43–73 is the RxLR-dEER element; the sequence is RVLQETATANDDVKKLSTSTKVDSKLNQEIK. Asparagine 85 carries N-linked (GlcNAc...) asparagine glycosylation. The helical transmembrane segment at 106–123 threads the bilayer; that stretch reads FFILATILLFPIAAYMVA.

It belongs to the RxLR effector family.

Its subcellular location is the secreted. The protein localises to the host endoplasmic reticulum membrane. In terms of biological role, secreted effector that does not suppress pattern-triggered immunity (PTI) in plant host. This is Secreted RxLR effector protein RXLR-C13 from Plasmopara halstedii (Downy mildew of sunflower).